Here is a 237-residue protein sequence, read N- to C-terminus: Demethylmenaquinone methyltransferase (237 aa).

Residues threonine 62, aspartate 80, 102–103 (DA), and serine 119 contribute to the S-adenosyl-L-methionine site.

This sequence belongs to the class I-like SAM-binding methyltransferase superfamily. MenG/UbiE family.

The enzyme catalyses a 2-demethylmenaquinol + S-adenosyl-L-methionine = a menaquinol + S-adenosyl-L-homocysteine + H(+). Its pathway is quinol/quinone metabolism; menaquinone biosynthesis; menaquinol from 1,4-dihydroxy-2-naphthoate: step 2/2. Its function is as follows. Methyltransferase required for the conversion of demethylmenaquinol (DMKH2) to menaquinol (MKH2). This chain is Demethylmenaquinone methyltransferase, found in Renibacterium salmoninarum (strain ATCC 33209 / DSM 20767 / JCM 11484 / NBRC 15589 / NCIMB 2235).